Reading from the N-terminus, the 660-residue chain is MKAKQADAVLVLENIVRKFPAGETFVTVLKDINLTIKRGEMVAIVGASGSGKSTLMNILGCLDRPTFGRYWISGKETASLSADELSALRRNHFGFIFQRYHLLNELTALGNVEIPAVYAGYAPEVRRKRAEDLLTRLGMRDRIHHRPNQLSGGQQQRVSIARALMNNAEVILADEPTGALDKKSGQEVLRILDELHQEGRTIIMVTHDMQVAERADRIIEISDGEIIADNVSKVAKTKTDSQALYGKQVLKDQKTLGFFRSFAERFREAFVMALLAMNAHRMRTFLTMLGVIIGIGAIIAMVALGNGTREKILENFKSLGSNTLTILPGKSLSDPQAEKITSLVEADAEALSKLPYVSGVTPQMSASSTIRFGSVEADVVIAGVGEQYFQTQGLNAVQGRLFDQKSVHDRAIDLVIEKEALAVLFPHSHESPLGKVVHVGNVPVRIVGVIDPQHNGGTSSTLQVYLPYTTVQTRFLGTTQVRAITVKIADTVDSNLAETMVRRFLIMRHGEEDFFIRNSQLFRDRIMESTHILTLLVSSIAAISLIVGGIGVMNIMLVTVSERINEIGVRMAVGARQSDILQQFLIEAILVCVIGGGLGILFGMSIGGLFLLFKAPIHLIYTIDSIILSLTFSTLIGVCFGFSPARQASRLDPVVALSRD.

In terms of domain architecture, ABC transporter spans 10-248 (LVLENIVRKF…TDSQALYGKQ (239 aa)). ATP is bound at residue 46–53 (GASGSGKS). A run of 4 helical transmembrane segments spans residues 285–305 (FLTM…VALG), 532–552 (ILTL…GIGV), 593–613 (VIGG…FLLF), and 625–645 (SIIL…FSPA).

Belongs to the ABC transporter superfamily. Macrolide exporter (TC 3.A.1.122) family. In terms of assembly, homodimer.

The protein localises to the cell inner membrane. Functionally, non-canonical ABC transporter that contains transmembrane domains (TMD), which form a pore in the inner membrane, and an ATP-binding domain (NBD), which is responsible for energy generation. Confers resistance against macrolides. This chain is Macrolide export ATP-binding/permease protein MacB, found in Bartonella henselae (strain ATCC 49882 / DSM 28221 / CCUG 30454 / Houston 1) (Rochalimaea henselae).